Consider the following 359-residue polypeptide: Dual-specificity RNA methyltransferase RlmN (359 aa).

Glutamate 86 acts as the Proton acceptor in catalysis. The Radical SAM core domain occupies 105–338 (EGEKYTICVS…CTIRESKGID (234 aa)). A disulfide bridge connects residues cysteine 112 and cysteine 343. Residues cysteine 119, cysteine 123, and cysteine 126 each contribute to the [4Fe-4S] cluster site. Residues 169–170 (GE), serine 201, 224–226 (SLH), and asparagine 300 each bind S-adenosyl-L-methionine. Catalysis depends on cysteine 343, which acts as the S-methylcysteine intermediate.

Belongs to the radical SAM superfamily. RlmN family. [4Fe-4S] cluster is required as a cofactor.

It localises to the cytoplasm. It catalyses the reaction adenosine(2503) in 23S rRNA + 2 reduced [2Fe-2S]-[ferredoxin] + 2 S-adenosyl-L-methionine = 2-methyladenosine(2503) in 23S rRNA + 5'-deoxyadenosine + L-methionine + 2 oxidized [2Fe-2S]-[ferredoxin] + S-adenosyl-L-homocysteine. It carries out the reaction adenosine(37) in tRNA + 2 reduced [2Fe-2S]-[ferredoxin] + 2 S-adenosyl-L-methionine = 2-methyladenosine(37) in tRNA + 5'-deoxyadenosine + L-methionine + 2 oxidized [2Fe-2S]-[ferredoxin] + S-adenosyl-L-homocysteine. Its function is as follows. Specifically methylates position 2 of adenine 2503 in 23S rRNA and position 2 of adenine 37 in tRNAs. m2A2503 modification seems to play a crucial role in the proofreading step occurring at the peptidyl transferase center and thus would serve to optimize ribosomal fidelity. In Wolinella succinogenes (strain ATCC 29543 / DSM 1740 / CCUG 13145 / JCM 31913 / LMG 7466 / NCTC 11488 / FDC 602W) (Vibrio succinogenes), this protein is Dual-specificity RNA methyltransferase RlmN.